The primary structure comprises 117 residues: Large ribosomal subunit protein uL18 (117 aa).

This sequence belongs to the universal ribosomal protein uL18 family. In terms of assembly, part of the 50S ribosomal subunit; part of the 5S rRNA/L5/L18/L25 subcomplex. Contacts the 5S and 23S rRNAs.

In terms of biological role, this is one of the proteins that bind and probably mediate the attachment of the 5S RNA into the large ribosomal subunit, where it forms part of the central protuberance. The protein is Large ribosomal subunit protein uL18 of Buchnera aphidicola subsp. Acyrthosiphon kondoi (Acyrthosiphon kondoi symbiotic bacterium).